We begin with the raw amino-acid sequence, 197 residues long: Chaperone protein dnaJ 20, chloroplastic (197 aa).

A chloroplast-targeting transit peptide spans 1–60 (MKCYKSSSILSTNHHPFFYKQQPISSLQPTSIPTTISYPTRTRFSSTRIQSRLTHDDPVK). Positions 66–133 (SFYDLLGVTE…RRRVLYDRDL (68 aa)) constitute a J domain. The segment at 169 to 197 (SGLRRRSNQKDNNTMSWAARMRRQQQESS) is disordered.

The protein belongs to the DnaJ family. C/III subfamily. In terms of tissue distribution, light-grown seedlings.

Its subcellular location is the plastid. It is found in the chloroplast. Plays a continuous role in plant development probably in the structural organization of compartments. This Arabidopsis thaliana (Mouse-ear cress) protein is Chaperone protein dnaJ 20, chloroplastic (ATJ20).